Reading from the N-terminus, the 384-residue chain is Putative dioxygenase SSO1533 (384 aa).

3 residues coordinate Fe cation: His296, Glu302, and His332.

Belongs to the homogentisate dioxygenase family. Fe cation is required as a cofactor.

The protein is Putative dioxygenase SSO1533 of Saccharolobus solfataricus (strain ATCC 35092 / DSM 1617 / JCM 11322 / P2) (Sulfolobus solfataricus).